Here is a 197-residue protein sequence, read N- to C-terminus: Ribose 1,5-bisphosphate phosphokinase PhnN (197 aa).

21–28 (GPSGAGKD) serves as a coordination point for ATP.

The protein belongs to the ribose 1,5-bisphosphokinase family.

The catalysed reaction is alpha-D-ribose 1,5-bisphosphate + ATP = 5-phospho-alpha-D-ribose 1-diphosphate + ADP. The protein operates within metabolic intermediate biosynthesis; 5-phospho-alpha-D-ribose 1-diphosphate biosynthesis; 5-phospho-alpha-D-ribose 1-diphosphate from D-ribose 5-phosphate (route II): step 3/3. Its function is as follows. Catalyzes the phosphorylation of ribose 1,5-bisphosphate to 5-phospho-D-ribosyl alpha-1-diphosphate (PRPP). In Rhizobium etli (strain CIAT 652), this protein is Ribose 1,5-bisphosphate phosphokinase PhnN.